The sequence spans 119 residues: Ribonuclease P protein component (119 aa).

Belongs to the RnpA family. As to quaternary structure, consists of a catalytic RNA component (M1 or rnpB) and a protein subunit.

The catalysed reaction is Endonucleolytic cleavage of RNA, removing 5'-extranucleotides from tRNA precursor.. RNaseP catalyzes the removal of the 5'-leader sequence from pre-tRNA to produce the mature 5'-terminus. It can also cleave other RNA substrates such as 4.5S RNA. The protein component plays an auxiliary but essential role in vivo by binding to the 5'-leader sequence and broadening the substrate specificity of the ribozyme. This chain is Ribonuclease P protein component, found in Shewanella woodyi (strain ATCC 51908 / MS32).